Consider the following 96-residue polypeptide: Defensin-like protein 69 (96 aa).

Residues 1–19 (MGSSKLLVAFTLIVMMTIS) form the signal peptide. 4 cysteine pairs are disulfide-bonded: Cys-37-Cys-86, Cys-41-Cys-64, Cys-50-Cys-84, and Cys-54-Cys-85.

It belongs to the DEFL family.

The protein localises to the secreted. This Arabidopsis thaliana (Mouse-ear cress) protein is Defensin-like protein 69.